We begin with the raw amino-acid sequence, 310 residues long: Protein N-terminal asparagine amidohydrolase (310 aa).

In terms of assembly, monomer.

It localises to the cytoplasm. It catalyses the reaction N-terminal L-asparaginyl-[protein] + H2O + H(+) = N-terminal L-aspartyl-[protein] + NH4(+). N-terminal asparagine deamidase that mediates deamidation of N-terminal asparagine residues to aspartate. Required for the ubiquitin-dependent turnover of intracellular proteins that initiate with Met-Asn. These proteins are acetylated on the retained initiator methionine and can subsequently be modified by the removal of N-acetyl methionine by acylaminoacid hydrolase (AAH). Conversion of the resulting N-terminal asparagine to aspartate by NTAN1/PNAD renders the protein susceptible to arginylation, polyubiquitination and degradation as specified by the N-end rule. This enzyme does not act on substrates with internal or C-terminal asparagines and does not act on glutamine residues in any position. The protein is Protein N-terminal asparagine amidohydrolase of Mus musculus (Mouse).